Consider the following 641-residue polypeptide: YAP1-binding protein 2 (641 aa).

This sequence belongs to the YBP1 family.

It is found in the cytoplasm. Functionally, involved in oxidative stress response and redox homeostasis. Required for hydrogen peroxide-induced activation of YAP1. Acts in a parallele pathway to YBP1. The sequence is that of YAP1-binding protein 2 from Saccharomyces cerevisiae (strain ATCC 204508 / S288c) (Baker's yeast).